The sequence spans 647 residues: Acetyl-coenzyme A synthetase (647 aa).

CoA contacts are provided by residues 192-195 (RGGR), Thr310, and Asn334. ATP-binding positions include 386–388 (GEP), 410–415 (DTWWQT), Asp499, and Arg514. Ser522 serves as a coordination point for CoA. Arg525 lines the ATP pocket. The Mg(2+) site is built by Val536, His538, and Val541. Arg583 is a binding site for CoA. At Lys608 the chain carries N6-acetyllysine.

This sequence belongs to the ATP-dependent AMP-binding enzyme family. Requires Mg(2+) as cofactor. Post-translationally, acetylated. Deacetylation by the SIR2-homolog deacetylase activates the enzyme.

The enzyme catalyses acetate + ATP + CoA = acetyl-CoA + AMP + diphosphate. In terms of biological role, catalyzes the conversion of acetate into acetyl-CoA (AcCoA), an essential intermediate at the junction of anabolic and catabolic pathways. AcsA undergoes a two-step reaction. In the first half reaction, AcsA combines acetate with ATP to form acetyl-adenylate (AcAMP) intermediate. In the second half reaction, it can then transfer the acetyl group from AcAMP to the sulfhydryl group of CoA, forming the product AcCoA. This is Acetyl-coenzyme A synthetase from Caulobacter vibrioides (strain ATCC 19089 / CIP 103742 / CB 15) (Caulobacter crescentus).